Reading from the N-terminus, the 665-residue chain is Prelamin-A/C (665 aa).

Methionine 1 bears the N-acetylmethionine mark. The interval methionine 1–arginine 25 is disordered. The head stretch occupies residues methionine 1–glutamate 33. The tract at residues methionine 1 to alanine 130 is interaction with MLIP. Position 3 is a phosphothreonine (threonine 3). Phosphoserine is present on serine 5. Phosphothreonine is present on threonine 10. Serine 12 and serine 18 each carry phosphoserine. Residue threonine 19 is modified to Phosphothreonine. At serine 22 the chain carries Phosphoserine. An IF rod domain is found at glutamate 31–leucine 387. At lysine 32 the chain carries N6-acetyllysine; alternate. Lysine 32 is modified (N6-succinyllysine; alternate). A Glycyl lysine isopeptide (Lys-Gly) (interchain with G-Cter in SUMO2); alternate cross-link involves residue lysine 32. The interval aspartate 34–valine 70 is coil 1A. Phosphoserine occurs at positions 51, 66, and 71. Residues serine 71 to alanine 80 are linker 1. 2 positions are modified to N6-acetyllysine: lysine 78 and lysine 97. Positions tyrosine 81–threonine 218 are coil 1B. Lysine 97 participates in a covalent cross-link: Glycyl lysine isopeptide (Lys-Gly) (interchain with G-Cter in SUMO2). Serine 107 carries the post-translational modification Phosphoserine. N6-acetyllysine is present on residues lysine 108, lysine 114, lysine 123, lysine 135, lysine 144, and lysine 155. Lysine 171 carries the N6-acetyllysine; alternate modification. The residue at position 171 (lysine 171) is an N6-succinyllysine; alternate. Lysine 171 participates in a covalent cross-link: Glycyl lysine isopeptide (Lys-Gly) (interchain with G-Cter in SUMO2); alternate. Residues lysine 180, lysine 201, and lysine 208 each carry the N6-acetyllysine modification. A Glycyl lysine isopeptide (Lys-Gly) (interchain with G-Cter in SUMO2); alternate cross-link involves residue lysine 201. Residue lysine 201 forms a Glycyl lysine isopeptide (Lys-Gly) (interchain with G-Cter in SUMO); alternate linkage. Lysine 208 participates in a covalent cross-link: Glycyl lysine isopeptide (Lys-Gly) (interchain with G-Cter in SUMO2). Serine 212 bears the Phosphoserine mark. Glycyl lysine isopeptide (Lys-Gly) (interchain with G-Cter in SUMO2) cross-links involve residues lysine 219 and lysine 233. A linker 2 region spans residues lysine 219 to alanine 242. An N6-acetyllysine mark is found at lysine 233, lysine 260, lysine 265, and lysine 270. The coil 2 stretch occupies residues aspartate 243–glutamate 383. Lysine 260 is covalently cross-linked (Glycyl lysine isopeptide (Lys-Gly) (interchain with G-Cter in SUMO2); alternate). A Glycyl lysine isopeptide (Lys-Gly) (interchain with G-Cter in SUMO2); alternate cross-link involves residue lysine 270. Serine 277, serine 282, serine 301, and serine 307 each carry phosphoserine. Residue lysine 311 forms a Glycyl lysine isopeptide (Lys-Gly) (interchain with G-Cter in SUMO2); alternate linkage. 3 positions are modified to N6-acetyllysine: lysine 311, lysine 316, and lysine 341. Glycyl lysine isopeptide (Lys-Gly) (interchain with G-Cter in SUMO2) cross-links involve residues lysine 366 and lysine 378. Residues glutamate 384 to valine 442 form a disordered region. Positions glutamate 384 to methionine 665 are tail. Residues serine 390, serine 392, serine 395, serine 398, serine 403, serine 404, serine 406, serine 407, serine 409, and serine 414 each carry the phosphoserine modification. Phosphoserine; by CDK1 is present on serine 392. The span at serine 395–serine 409 shows a compositional bias: low complexity. Phosphothreonine is present on threonine 416. N6-acetyllysine occurs at positions 417 and 420. Residues lysine 417 and lysine 420 each participate in a glycyl lysine isopeptide (Lys-Gly) (interchain with G-Cter in SUMO2) cross-link. The Nuclear localization signal signature appears at lysine 417–glutamate 422. Phosphoserine is present on residues serine 423, serine 426, serine 429, and serine 431. The LTD domain maps to serine 428 to arginine 545. Residue lysine 450 forms a Glycyl lysine isopeptide (Lys-Gly) (interchain with G-Cter in SUMO2); alternate linkage. Lysine 450 and lysine 457 each carry N6-acetyllysine. Phosphoserine is present on residues serine 458, glutamate 460, and serine 463. Lysine 486 carries the post-translational modification N6-acetyllysine. Lysine 486 is covalently cross-linked (Glycyl lysine isopeptide (Lys-Gly) (interchain with G-Cter in SUMO2)). At threonine 496 the chain carries Phosphothreonine. The residue at position 500 (serine 500) is a Phosphoserine. Threonine 505 and threonine 510 each carry phosphothreonine. Phosphoserine occurs at positions 533 and 546. Threonine 548 carries the post-translational modification Phosphothreonine. Residues asparagine 553–aspartate 577 form a disordered region. Phosphoserine is present on residues serine 570, cysteine 572, and serine 573. A Glycyl lysine isopeptide (Lys-Gly) (interchain with G-Cter in SUMO2); alternate cross-link involves residue lysine 599. Lysine 599 is covalently cross-linked (Glycyl lysine isopeptide (Lys-Gly) (interchain with G-Cter in SUMO1); alternate). Serine 613, serine 614, serine 617, and serine 620 each carry phosphoserine. Residues serine 626 and serine 629 are each glycosylated (O-linked (GlcNAc) serine). Phosphoserine is present on residues serine 629, serine 633, serine 637, and serine 653. Residues leucine 648–cysteine 662 constitute a propeptide, removed in Lamin-A/C form. Cysteine 662 is modified (cysteine methyl ester). Residue cysteine 662 is the site of S-farnesyl cysteine attachment. Residues serine 663 to methionine 665 constitute a propeptide, removed in Prelamin-A/C form and in Lamin-A/C form.

Belongs to the intermediate filament family. As to quaternary structure, homodimer of lamin A and lamin C. Lamin dimers then assemble into dimeric head-to-tail polymers. Ultimately, two head-to-tail polymers assemble laterally into a protofilament with a uniformly shaped rod of 3.5 nm in diameter. Interacts with lamin-associated polypeptides IA, IB and TMPO-alpha, RB1 and with emerin. Proteolytically processed isoform A interacts with NARF. Interacts with SREBF1, SREBF2, SUN1, SUN2 and TMEM43. Interacts with TMEM201. Prelamin-A/C interacts with EMD. Interacts with DMPK; may regulate nuclear envelope stability. Interacts with MLIP. Interacts with SUV39H1; the interaction increases stability of SUV39H1. Interacts with ITSN1 isoform 2. Interacts with IFFO1; the interaction forms an interior nucleoskeleton and the recruitment to DNA double-strand breaks. In terms of assembly, interacts with EMD. Interacts (via C-terminus) with LEMD2 (via N-terminus) (in vitro). In terms of processing, proteolytic cleavage of the C-terminal of 18 residues of prelamin-A/C results in the production of lamin-A/C. The prelamin-A/C maturation pathway includes farnesylation of CAAX motif by protein farnesyltransferase (FNTA and FNTB), removal of the last three amino acids (-AAX) by RCE1/FACE2 and/or ZMPSTE24, methylation of the C-terminal cysteine by ICMT and endoproteolytic removal of the last 15 C-terminal amino acids by ZMPSTE24. Proteolytic cleavage requires prior farnesylation and methylation, and absence of these blocks cleavage. Post-translationally, farnesylation of prelamin-A/C facilitates nuclear envelope targeting. Phosphorylation plays a key role in lamin organization, subcellular localization and nuclear envelope disintegration. Phosphorylation by CDK1 at Ser-22 and Ser-392 at the onset of mitosis drives lamin disassembly and nuclear envelope breakdown. Phosphorylation at Ser-22 and Ser-392 during interphase promotes localization to the nucleoplasm and regulates lamina assembly. Phosphorylation at Ser-22, Ser-392 and Ser-629 during interphase causes redistribution between the nucleus and the cytoplasm. Phosphorylation at Ser-22 by CDK1 regulates matrix stiffness. Phosphorylation status of Ser-22 determines its localization between double-strand break (DSB) sites and the nuclear matrix. Phosphorylated by ATR at Ser-282 in response to DNA damage, leading to lamin disassembly and nuclear envelope rupture. Phosphorylation also regulates stability in micronuclei arising from genome instability: phosphorylation at Ser-395 by ATR in response to genome instability and double-stranded DNA breaks primes LMNA for subsequent phosphorylation at Ser-392 by CDK1 and micronuclei envelope rupture. The rupture of micronuclear envelope triggers the cGAS-STING pathway thereby activating the type I interferon response and innate immunity. In terms of processing, isoform C is phosphorylated on Ser-392, Ser-407 and Ser-409 at interphase. Post-translationally, acetylation by KAT8 is required for nuclear architecture. Sumoylation is necessary for the localization to the nuclear envelope. In terms of processing, the N-terminus is blocked. Expressed in liver and in bone marrow (at protein level). Expressed in cardiomyocytes. As to expression, specifically expressed in germ cells.

The protein localises to the nucleus lamina. It localises to the nucleus envelope. The protein resides in the nucleus. Its subcellular location is the nucleoplasm. It is found in the nucleus matrix. Lamins are intermediate filament proteins that assemble into a filamentous meshwork, and which constitute the major components of the nuclear lamina, a fibrous layer on the nucleoplasmic side of the inner nuclear membrane. Lamins provide a framework for the nuclear envelope, bridging the nuclear envelope and chromatin, thereby playing an important role in nuclear assembly, chromatin organization, nuclear membrane and telomere dynamics. Lamin A and C also regulate matrix stiffness by conferring nuclear mechanical properties. The structural integrity of the lamina is strictly controlled by the cell cycle, as seen by the disintegration and formation of the nuclear envelope in prophase and telophase, respectively. Lamin A and C are present in equal amounts in the lamina of mammals. Also invoved in DNA repair: recruited by DNA repair proteins XRCC4 and IFFO1 to the DNA double-strand breaks (DSBs) to prevent chromosome translocation by immobilizing broken DNA ends. Required for normal development of peripheral nervous system and skeletal muscle and for muscle satellite cell proliferation. Required for osteoblastogenesis and bone formation. Also prevents fat infiltration of muscle and bone marrow, helping to maintain the volume and strength of skeletal muscle and bone. Required for cardiac homeostasis. Its function is as follows. Prelamin-A/C can accelerate smooth muscle cell senescence. It acts to disrupt mitosis and induce DNA damage in vascular smooth muscle cells (VSMCs), leading to mitotic failure, genomic instability, and premature senescence. Functionally, isoform C2 may have a role in determining the organization of nuclear and chromosomal structures during spermatogenesis. The protein is Prelamin-A/C (Lmna) of Mus musculus (Mouse).